A 548-amino-acid polypeptide reads, in one-letter code: Dihydroxy-acid dehydratase (548 aa).

Residue Asp-78 participates in Mg(2+) binding. Cys-119 lines the [2Fe-2S] cluster pocket. Residues Asp-120 and Lys-121 each coordinate Mg(2+). Lys-121 is subject to N6-carboxylysine. Residue Cys-185 coordinates [2Fe-2S] cluster. Glu-438 is a Mg(2+) binding site. Ser-464 (proton acceptor) is an active-site residue.

Belongs to the IlvD/Edd family. Homodimer. Requires [2Fe-2S] cluster as cofactor. It depends on Mg(2+) as a cofactor.

The enzyme catalyses (2R)-2,3-dihydroxy-3-methylbutanoate = 3-methyl-2-oxobutanoate + H2O. It carries out the reaction (2R,3R)-2,3-dihydroxy-3-methylpentanoate = (S)-3-methyl-2-oxopentanoate + H2O. The protein operates within amino-acid biosynthesis; L-isoleucine biosynthesis; L-isoleucine from 2-oxobutanoate: step 3/4. Its pathway is amino-acid biosynthesis; L-valine biosynthesis; L-valine from pyruvate: step 3/4. Functionally, functions in the biosynthesis of branched-chain amino acids. Catalyzes the dehydration of (2R,3R)-2,3-dihydroxy-3-methylpentanoate (2,3-dihydroxy-3-methylvalerate) into 2-oxo-3-methylpentanoate (2-oxo-3-methylvalerate) and of (2R)-2,3-dihydroxy-3-methylbutanoate (2,3-dihydroxyisovalerate) into 2-oxo-3-methylbutanoate (2-oxoisovalerate), the penultimate precursor to L-isoleucine and L-valine, respectively. The chain is Dihydroxy-acid dehydratase from Methanothrix thermoacetophila (strain DSM 6194 / JCM 14653 / NBRC 101360 / PT) (Methanosaeta thermophila).